The following is a 165-amino-acid chain: Lipoprotein signal peptidase (165 aa).

A run of 3 helical transmembrane segments spans residues 9 to 29 (FLAIACFVLIDWVTKLAVLLY), 69 to 89 (KYFLFFIRITIILGILAFLFL), and 98 to 118 (IRFSLILLCSGAIGNVGDIVF). Residues D124 and D142 contribute to the active site. The chain crosses the membrane as a helical span at residues 133-153 (WFFPTFNFADIFISLGTLIFI).

Belongs to the peptidase A8 family.

It localises to the cell inner membrane. It catalyses the reaction Release of signal peptides from bacterial membrane prolipoproteins. Hydrolyzes -Xaa-Yaa-Zaa-|-(S,diacylglyceryl)Cys-, in which Xaa is hydrophobic (preferably Leu), and Yaa (Ala or Ser) and Zaa (Gly or Ala) have small, neutral side chains.. Its pathway is protein modification; lipoprotein biosynthesis (signal peptide cleavage). Functionally, this protein specifically catalyzes the removal of signal peptides from prolipoproteins. The chain is Lipoprotein signal peptidase from Chlamydia abortus (strain DSM 27085 / S26/3) (Chlamydophila abortus).